We begin with the raw amino-acid sequence, 1830 residues long: Urea amidolyase (1830 aa).

ATP is bound by residues 115–122 (GAIVIGKT), Lys-740, Glu-823, and Asn-858. Residues 625-1068 (PFETVLIANR…ATKILDSYDY (444 aa)) enclose the Biotin carboxylation domain. The ATP-grasp domain occupies 744–941 (REIAEKAGVP…LVEWMLRIAA (198 aa)). The region spanning 1752–1830 (AVEEEYPEDA…DAGDLVAVIQ (79 aa)) is the Biotinyl-binding domain. Position 1796 is an N6-biotinyllysine (Lys-1796).

It belongs to the DUR1,2 family. As to quaternary structure, monomer. Requires biotin as cofactor.

The catalysed reaction is urea + hydrogencarbonate + ATP = urea-1-carboxylate + ADP + phosphate + H(+). It catalyses the reaction urea-1-carboxylate + H2O + 3 H(+) = 2 NH4(+) + 2 CO2. It participates in nitrogen metabolism; urea degradation; CO(2) and NH(3) from urea (allophanate route): step 1/2. It functions in the pathway nitrogen metabolism; urea degradation; CO(2) and NH(3) from urea (allophanate route): step 2/2. Involved in uracil catabolism. Hydrolysis of urea to ammonia and CO(2). This Lachancea kluyveri (Yeast) protein is Urea amidolyase (DUR1,2).